A 129-amino-acid chain; its full sequence is Translation initiation factor 5A (129 aa).

Residue Lys-36 is modified to Hypusine.

Belongs to the eIF-5A family.

It is found in the cytoplasm. Functionally, functions by promoting the formation of the first peptide bond. The sequence is that of Translation initiation factor 5A (eIF5A) from Methanobrevibacter smithii (strain ATCC 35061 / DSM 861 / OCM 144 / PS).